The chain runs to 118 residues: V-type proton ATPase subunit G 1 (118 aa).

Residue Ala2 is modified to N-acetylalanine.

It belongs to the V-ATPase G subunit family. V-ATPase is a heteromultimeric enzyme made up of two complexes: the ATP-hydrolytic V1 complex and the proton translocation V0 complex. The V1 complex consists of three catalytic AB heterodimers that form a heterohexamer, three peripheral stalks each consisting of EG heterodimers, one central rotor including subunits D and F, and the regulatory subunits C and H. The proton translocation complex V0 consists of the proton transport subunit a, a ring of proteolipid subunits c9c'', rotary subunit d, subunits e and f, and the accessory subunits ATP6AP1/Ac45 and ATP6AP2/PRR. Kidney; localizes to early distal nephron, encompassing thick ascending limbs and distal convoluted tubules (at protein level). Ubiquitous.

It is found in the apical cell membrane. Functionally, subunit of the V1 complex of vacuolar(H+)-ATPase (V-ATPase), a multisubunit enzyme composed of a peripheral complex (V1) that hydrolyzes ATP and a membrane integral complex (V0) that translocates protons. V-ATPase is responsible for acidifying and maintaining the pH of intracellular compartments and in some cell types, is targeted to the plasma membrane, where it is responsible for acidifying the extracellular environment. In aerobic conditions, involved in intracellular iron homeostasis, thus triggering the activity of Fe(2+) prolyl hydroxylase (PHD) enzymes, and leading to HIF1A hydroxylation and subsequent proteasomal degradation. The sequence is that of V-type proton ATPase subunit G 1 (ATP6V1G1) from Homo sapiens (Human).